Consider the following 481-residue polypeptide: Sucrose phosphorylase (481 aa).

Residues Asp-49, His-87, 191-193 (RLD), Glu-234, 291-292 (HD), 335-338 (DIYQ), and Arg-392 each bind sucrose. The Nucleophile role is filled by Asp-193. The active-site Proton donor is the Glu-234.

It belongs to the glycosyl hydrolase 13 family. Sucrose phosphorylase subfamily.

Its subcellular location is the cytoplasm. The catalysed reaction is sucrose + phosphate = D-fructose + alpha-D-glucose 1-phosphate. Intracellular catabolism of sucrose. Being intracellular, probably not involved in synthesis of extracellular polysaccharides. The polypeptide is Sucrose phosphorylase (Streptococcus mutans serotype c (strain ATCC 700610 / UA159)).